The chain runs to 100 residues: Large ribosomal subunit protein uL23 (100 aa).

It belongs to the universal ribosomal protein uL23 family. As to quaternary structure, part of the 50S ribosomal subunit. Contacts protein L29, and trigger factor when it is bound to the ribosome.

Its function is as follows. One of the early assembly proteins it binds 23S rRNA. One of the proteins that surrounds the polypeptide exit tunnel on the outside of the ribosome. Forms the main docking site for trigger factor binding to the ribosome. This chain is Large ribosomal subunit protein uL23, found in Buchnera aphidicola subsp. Baizongia pistaciae (strain Bp).